We begin with the raw amino-acid sequence, 248 residues long: tRNA uridine(34) hydroxylase (248 aa).

Residues 127–221 (RGRPLVLLDT…YFEEVGGEGY (95 aa)) enclose the Rhodanese domain. The active-site Cysteine persulfide intermediate is the C181.

This sequence belongs to the TrhO family.

It carries out the reaction uridine(34) in tRNA + AH2 + O2 = 5-hydroxyuridine(34) in tRNA + A + H2O. Catalyzes oxygen-dependent 5-hydroxyuridine (ho5U) modification at position 34 in tRNAs. The protein is tRNA uridine(34) hydroxylase of Xanthomonas euvesicatoria pv. vesicatoria (strain 85-10) (Xanthomonas campestris pv. vesicatoria).